Consider the following 946-residue polypeptide: Rho GTPase-activating protein 4 (946 aa).

The 299-residue stretch at 19 to 317 (TQVKEMRWQL…AVEALDPPGD (299 aa)) folds into the F-BAR domain. A coiled-coil region spans residues 128-195 (LAQRLSHIAE…REAERQEEKR (68 aa)). Residues 187–196 (EAERQEEKRA) show a composition bias toward basic and acidic residues. 2 disordered regions span residues 187-220 (EAER…SLKK) and 402-435 (LDSF…QQQE). 2 stretches are compositionally biased toward low complexity: residues 202-211 (TTTAGATEAG) and 407-419 (TSPS…STSS). A Rho-GAP domain is found at 507 to 695 (GDMEKFIQSS…TLIVQPDRVF (189 aa)). Positions 746-805 (EGVVEAVACFAYTGRTAQELSFRRGDVLRLHERASSDWWRGEHNGMRGLIPHKYITLPAG) constitute an SH3 domain. Residues S860, S901, and S906 each carry the phosphoserine modification. A disordered region spans residues 885 to 946 (KTSVRQGLGP…QGLDTTPKPH (62 aa)). The segment covering 901–910 (SPGPRSPKAP) has biased composition (pro residues). Low complexity predominate over residues 924–934 (GPGAPASPSAS).

In terms of assembly, interacts with NCKAP1L. As to expression, predominantly in hematopoietic cells (spleen, thymus and leukocytes); low levels in placenta, lung and various fetal tissues.

The protein resides in the cytoplasm. In terms of biological role, inhibitory effect on stress fiber organization. May down-regulate Rho-like GTPase in hematopoietic cells. In Homo sapiens (Human), this protein is Rho GTPase-activating protein 4.